We begin with the raw amino-acid sequence, 1933 residues long: MAQGSRRRKVVLTAGAEGCSSSSGPDMEELLRCAERDLNIDARQLALAPGGTHVVALVSTRWLASLRERRLGPCPRAEGLGEAEVRTLLQRSVQRLPQGWTRVEVHGLRKRRLSYPLSRVLPFEEGSCSPETLTRFMQEVAAQNYRNLWRHAYHTYGQPYSHSTAPSAIPALDSIRQALQRVYGCTFLPVGESMQCLSNVRDGPSRGSSACPSLLRAEALLESPEMLYVVHPYVQFSLHDVVTFSPAKLTNSQAKVLFILFRVLRAMDACHRQGLACGALSLHHIAVDEKLCSELRLDLSAYEMPSEDENQEVSEEKDRTGVKSEKDGEGRPGCPTCQKELRGLVLDWVHGRVSNFYYLMQLNRLAGRRQGDPNYHPVLPWVVDFTTPYGRFRDLRKSKFRLNKGDKQLDFTYEMTRQAFVAGGAGSGEPLHVPHHISDVLSDITYYVYKARRTPRSVLCGHVRAQWEPHEYPATMERMQTWTPDECIPEFYTDPSIFCSIHPDMPDLDVPAWCSSNQEFVTAHRALLESWEVSQDLHHWIDLTFGYKLQGKEAVKEKNVCLHLVDAHTHLTSYGVVQLFDQPHPQRLAGAPALAPEPPLIPRLLVQPIQEATGQEDISGQLINGAGRHVVEVTPCESGWTRERPTAGEDDLEQATEALDSISIPGKAGDQPGSSSSQASPGLLPFSAPSGSRPGRRSKATGLDSGEGDEGKIVLPEGFSPIQALEELEKVGNFLARGLGSQLEEPEKPQAQPPVYLQSLFHRDMQVLGVLLAEMVFATRVRILQPDAPLWVRFEAVRGLCTRHSKDIPVSLQPVLDTLLQLSGPKSPLVVKKGKLDPLFEYRPVSQGLPPPSPAQLLSPFSSVVPFPTYFPALHKFILLYQARRVEDEVQGRELVFALWQQLGAVLNEITPEGLEILLPFVLSLMSEEHTAVYTAWYLFEPVAKALGPKNTIKYLLKPLIGAYENPCRLHGRFYLYTDCFVAQLVVRLGLQAFLIHLLPHVLQVLAGVEASQEEGKGLVGTTEDEENELPVPGPGSCAFGEEIQMGGQPAASSGLGLPDYRSGVSFHDQADLPDTEDFQAGLYVAESPQPQEAEAVSLGQLSDKSSTSEASQGEERGGDDGGAPVDKNSVKSGDSSQDLKQSEGSEEEEEEEEGCVVLEEEEQDEVTGTSELTLSDTILSMETVVAPGDGRDREEEEEPLPEQTEGKEQKILLDTACKMVRWLSAKLGPTVASRHVARNLLRLLTSCYVGPTRQQFTVSCDDSPPLNAGNIYQKRPVLGDIVSGPVLSCLLHIAHLYGEPVLTYQYLPYISYLVAPGSNSSPSRLNSRKEAGLLAAVTLTQKIIVYLSDTTLMDILPRISHEVLLPVLSFLTSFVTGFPSGAQARTVLCVKTISLIALICLRIGQEMVQQHLSEPVATFFQVFSHLHELRQQDLQLDLKGCTEGQLPEATFSDGQRRPVDPTLLEELQKVFTLEMAYTIYVPFSCLLGDIIRKIIPNHELVGELAGLYLESMSPSSLRNPASMEPVTPSAGPEWNPQSGSCLQDDGHSGTFGSVLVGNRIQIPDSQPQSSGPLGSISGVGSGGLSSRNEDNALKRELPRSAHGLSGNWLAYWQYEIGVSQQDAHFHFHQIRLQSFPGHTGAVKCVAALSSEDFFLSGSKDRTVRLWPLYNYGDGTSETAPRLIYAQHRKSVFYVGQLEAPQYVVSCDGAVHVWDPFTGKTLRTVDPSDSRVPLTAVAVMPAPHTSITMASSDSTLRFVDCRKPGLQHEFRLGGGLNPGLVRSLAVSPSGRSVVAGFSSGFMVLLDTRTGLVLRGWPAHEGDILQIKAVEGSVIVSSSSDHSLTVWKELEQKPTHHYKSASDPIHTFDLYGSEVVTGTVANKIGVCSLLEPPSQATTKLSSENFRGTLTSLALLPTKRHLLLGSDNGIIRLLA.

The segment at 1 to 643 is necessary and sufficient for the interaction with SQSTM1; that stretch reads MAQGSRRRKV…TPCESGWTRE (643 aa). Disordered regions lie at residues 305 to 334, 663 to 714, 1038 to 1057, 1090 to 1209, 1517 to 1544, and 1565 to 1590; these read PSEDENQEVSEEKDRTGVKSEKDGEGRPGC, SIPG…GKIV, CAFGEEIQMGGQPAASSGLG, QPQE…EGKE, SLRNPASMEPVTPSAGPEWNPQSGSCLQ, and DSQPQSSGPLGSISGVGSGGLSSRNE. Positions 314 to 330 are enriched in basic and acidic residues; that stretch reads SEEKDRTGVKSEKDGEG. Positions 333–610 constitute a BEACH domain; sequence GCPTCQKELR…IPRLLVQPIQ (278 aa). Residues 668–693 are compositionally biased toward low complexity; it reads AGDQPGSSSSQASPGLLPFSAPSGSR. 2 stretches are compositionally biased toward polar residues: residues 1100 to 1112 and 1131 to 1140; these read GQLSDKSSTSEAS and VKSGDSSQDL. Over residues 1145–1166 the composition is skewed to acidic residues; sequence GSEEEEEEEEGCVVLEEEEQDE. WD repeat units follow at residues 1638 to 1677, 1684 to 1724, 1776 to 1815, 1818 to 1856, and 1903 to 1933; these read GHTGAVKCVAALSSEDFFLSGSKDRTVRLWPLYNYGDGTS, IYAQ…TLRT, LNPGLVRSLAVSPSGRSVVAGFSSGFMVLLDTRTGLVLRG, AHEGDILQIKAVEGSVIVSSSSDHSLTVWKELEQKPTHH, and NFRGTLTSLALLPTKRHLLLGSDNGIIRLLA.

Belongs to the WD repeat WDR81 family. Interacts with WDR91; involved in early to late endosome cargo transport. Interacts with BECN1; negatively regulates the PI3 kinase/PI3K activity associated with endosomal membranes. Interacts with SQSTM1; the interaction is direct and regulates the interaction of SQSTM1 with ubiquitinated proteins. Interacts with MAP1LC3C; recruits MAP1LC3C to ubiquitinated protein aggregates in the aggrephagy process.

The protein localises to the early endosome membrane. It is found in the late endosome membrane. Its subcellular location is the lysosome membrane. It localises to the cytoplasmic vesicle. The protein resides in the autophagosome membrane. The protein localises to the mitochondrion. It is found in the cytoplasm. Its subcellular location is the cytosol. Its function is as follows. Functions as a negative regulator of the PI3 kinase/PI3K activity associated with endosomal membranes via BECN1, a core subunit of the PI3K complex. By modifying the phosphatidylinositol 3-phosphate/PtdInsP3 content of endosomal membranes may regulate endosome fusion, recycling, sorting and early to late endosome transport. It is for instance, required for the delivery of cargos like BST2/tetherin from early to late endosome and thereby participates indirectly to their degradation by the lysosome. May also play a role in aggrephagy, the macroautophagic degradation of ubiquitinated protein aggregates. In this process, may regulate the interaction of SQSTM1 with ubiquitinated proteins and also recruit MAP1LC3C. May also be involved in maintenance of normal mitochondrial structure and organization. In Rattus norvegicus (Rat), this protein is WD repeat-containing protein 81.